A 458-amino-acid chain; its full sequence is Retinoic acid receptor alpha-B (458 aa).

The segment at 1–79 (MYESVDVVGL…PPSPPPPPRV (79 aa)) is modulating. The disordered stretch occupies residues 48–75 (HWSGSNHSVETQSTSSEEIVPSPPSPPP). Positions 49-64 (WSGSNHSVETQSTSSE) are enriched in polar residues. The segment at residues 80 to 155 (YKPCFVCQDK…VGMSKESVRN (76 aa)) is a DNA-binding region (nuclear receptor). 2 NR C4-type zinc fingers span residues 83–103 (CFVC…CEGC) and 119–138 (CHRE…CQYC). Residues 156-177 (DRNKRKKDDKKQECLENYVLSP) form a hinge region. The NR LBD domain maps to 178-412 (DTEKMIEQVR…PLIQEMLENS (235 aa)). The short motif at 403-411 (PLIQEMLEN) is the 9aaTAD element. The segment at 411-458 (NSEGLEGGGSKGAGGGGGGGGGKGAPPGSCSPSLSPSSAHSSPSAHSP) is disordered. Residues 415–435 (LEGGGSKGAGGGGGGGGGKGA) show a composition bias toward gly residues. Over residues 436–458 (PPGSCSPSLSPSSAHSSPSAHSP) the composition is skewed to low complexity.

It belongs to the nuclear hormone receptor family. NR1 subfamily. Heterodimer; with an rxr molecule. Binds DNA preferentially as a rar/rxr heterodimer. As to expression, in the embryo, zygotic expression largely overlaps that of raraa, with high levels in hindbrain, lateral plate mesoderm (LPM) and tail bud, but in later stages rarab is expressed more broadly in the brain, pectoral fin bud and pharyngeal arches.

The protein resides in the nucleus. Functionally, receptor for retinoic acid. Retinoic acid receptors bind as heterodimers to their target response elements in response to their ligands, all-trans or 9-cis retinoic acid, and regulate gene expression in various biological processes. The rar/rxr heterodimers bind to the retinoic acid response elements (RARE) composed of tandem 5'-AGGTCA-3' sites known as DR1-DR5. Required for hindbrain development and, in lateral plate mesoderm, for specification of the pectoral fins. This Danio rerio (Zebrafish) protein is Retinoic acid receptor alpha-B.